A 280-amino-acid polypeptide reads, in one-letter code: Phosphatidylserine decarboxylase proenzyme (280 aa).

Active-site charge relay system; for autoendoproteolytic cleavage activity residues include Asp88, His144, and Ser247. Catalysis depends on Ser247, which acts as the Schiff-base intermediate with substrate; via pyruvic acid; for decarboxylase activity. Ser247 bears the Pyruvic acid (Ser); by autocatalysis mark.

Belongs to the phosphatidylserine decarboxylase family. PSD-B subfamily. Prokaryotic type I sub-subfamily. Heterodimer of a large membrane-associated beta subunit and a small pyruvoyl-containing alpha subunit. It depends on pyruvate as a cofactor. Post-translationally, is synthesized initially as an inactive proenzyme. Formation of the active enzyme involves a self-maturation process in which the active site pyruvoyl group is generated from an internal serine residue via an autocatalytic post-translational modification. Two non-identical subunits are generated from the proenzyme in this reaction, and the pyruvate is formed at the N-terminus of the alpha chain, which is derived from the carboxyl end of the proenzyme. The autoendoproteolytic cleavage occurs by a canonical serine protease mechanism, in which the side chain hydroxyl group of the serine supplies its oxygen atom to form the C-terminus of the beta chain, while the remainder of the serine residue undergoes an oxidative deamination to produce ammonia and the pyruvoyl prosthetic group on the alpha chain. During this reaction, the Ser that is part of the protease active site of the proenzyme becomes the pyruvoyl prosthetic group, which constitutes an essential element of the active site of the mature decarboxylase.

It is found in the cell membrane. It carries out the reaction a 1,2-diacyl-sn-glycero-3-phospho-L-serine + H(+) = a 1,2-diacyl-sn-glycero-3-phosphoethanolamine + CO2. Its pathway is phospholipid metabolism; phosphatidylethanolamine biosynthesis; phosphatidylethanolamine from CDP-diacylglycerol: step 2/2. Functionally, catalyzes the formation of phosphatidylethanolamine (PtdEtn) from phosphatidylserine (PtdSer). This is Phosphatidylserine decarboxylase proenzyme from Xanthomonas euvesicatoria pv. vesicatoria (strain 85-10) (Xanthomonas campestris pv. vesicatoria).